The chain runs to 226 residues: Urease accessory protein UreE (226 aa).

A disordered region spans residues 192–226 (PHGSGLHIHSIHSHGDGHSHDHDHSHGDHDSDHKH). Positions 204-226 (SHGDGHSHDHDHSHGDHDSDHKH) are enriched in basic and acidic residues.

The protein belongs to the UreE family.

It localises to the cytoplasm. Involved in urease metallocenter assembly. Binds nickel. Probably functions as a nickel donor during metallocenter assembly. The protein is Urease accessory protein UreE of Yersinia intermedia.